The primary structure comprises 347 residues: Oxygen sensor histidine kinase NreB (347 aa).

Positions 59, 62, 74, and 77 each coordinate [4Fe-4S] cluster. The Histidine kinase domain maps to 153 to 347 (RISRELHDGI…IVTLEVPITD (195 aa)). His-159 is subject to Phosphohistidine; by autocatalysis.

[4Fe-4S] cluster serves as cofactor. Post-translationally, autophosphorylated.

Its subcellular location is the cytoplasm. It carries out the reaction ATP + protein L-histidine = ADP + protein N-phospho-L-histidine.. Its activity is regulated as follows. Activated by cysteine desulfurase, Fe(2+) ions and cysteine and inhibited by oxygen and ADP. Functionally, member of the two-component regulatory system NreB/NreC involved in the control of dissimilatory nitrate/nitrite reduction in response to oxygen. NreB functions as a direct oxygen sensor histidine kinase which is autophosphorylated, in the absence of oxygen, probably at the conserved histidine residue, and transfers its phosphate group probably to a conserved aspartate residue of NreC. NreB/NreC activates the expression of the nitrate (narGHJI) and nitrite (nir) reductase operons, as well as the putative nitrate transporter gene narT. The polypeptide is Oxygen sensor histidine kinase NreB (nreB) (Staphylococcus carnosus (strain TM300)).